A 249-amino-acid chain; its full sequence is Bax inhibitor 1 (249 aa).

A run of 6 helical transmembrane segments spans residues 39–59 (LVYL…YLHV), 65–85 (GMLT…VPVF), 93–113 (ILLA…KLAV), 119–139 (ILVT…CAAI), 151–171 (GLLS…SIFG), and 213–233 (HALT…VIML).

It belongs to the BI1 family. In terms of tissue distribution, ubiquitous.

It localises to the membrane. Its function is as follows. Suppressor of apoptosis. The polypeptide is Bax inhibitor 1 (BI1) (Oryza sativa subsp. japonica (Rice)).